A 363-amino-acid polypeptide reads, in one-letter code: F-box protein At3g44326 (363 aa).

Residues 1–23 are disordered; it reads MLSSSSSSTVEQPSRGGSPGINA. An F-box domain is found at 27 to 66; the sequence is DVLRSNILTRLDGSSLAALSCTCSNLNSFCSDESLWRQQC.

This chain is F-box protein At3g44326, found in Arabidopsis thaliana (Mouse-ear cress).